A 330-amino-acid chain; its full sequence is 5'-AMP-activated protein kinase subunit gamma-1 (330 aa).

The tract at residues 1–21 (MESVAAESSPALENEHFQETP) is disordered. 3 consecutive CBS domains span residues 42 to 102 (PTSS…KSAL), 124 to 186 (SFKP…PKPE), and 197 to 259 (IGTY…NLDV). ADP contacts are provided by residues Arg-69, 84–89 (MLTITD), Val-129, 150–151 (HR), and Lys-169. Residues Arg-69, 84–89 (MLTITD), Val-129, His-150, 150–151 (HR), Lys-169, Thr-199, Ala-204, 225–226 (SA), and 241–244 (SKFD) contribute to the AMP site. Residues Arg-69, 84 to 89 (MLTITD), Val-129, 150 to 151 (HR), Arg-151, and Lys-169 each bind ATP. Residues 137 to 158 (LFDAVSSLIRNKIHRLPVIDPE) carry the AMPK pseudosubstrate motif. 241-244 (SKFD) lines the ADP pocket. ATP is bound at residue 241–244 (SKFD). Ser-260 bears the Phosphoserine; by ULK1 mark. Thr-262 is modified (phosphothreonine; by ULK1). Arg-268 is a binding site for ADP. Arg-268 contacts AMP. Arg-268 lines the ATP pocket. Ser-269 carries the phosphoserine; by ULK1 modification. A CBS 4 domain is found at 271–328 (YFEGVLKCYLHETLETIINRLVEAEVHRLVVVDEHDVVKGIVSLSDILQALVLTGGEK). Residues Leu-276 and 297 to 298 (HR) each bind ADP. Residues Leu-276, His-297, 297–298 (HR), and 313–316 (SLSD) contribute to the AMP site. ATP is bound by residues Leu-276 and 297–298 (HR).

The protein belongs to the 5'-AMP-activated protein kinase gamma subunit family. AMPK is a heterotrimer of an alpha catalytic subunit (PRKAA1 or PRKAA2), a beta (PRKAB1 or PRKAB2) and a gamma non-catalytic subunits (PRKAG1, PRKAG2 or PRKAG3). Interacts with FNIP1 and FNIP2. Post-translationally, phosphorylated by ULK1 and ULK2; leading to negatively regulate AMPK activity and suggesting the existence of a regulatory feedback loop between ULK1, ULK2 and AMPK. In terms of processing, glycosylated; O-GlcNAcylated by OGT, promoting the AMP-activated protein kinase (AMPK) activity.

AMP/ATP-binding subunit of AMP-activated protein kinase (AMPK), an energy sensor protein kinase that plays a key role in regulating cellular energy metabolism. In response to reduction of intracellular ATP levels, AMPK activates energy-producing pathways and inhibits energy-consuming processes: inhibits protein, carbohydrate and lipid biosynthesis, as well as cell growth and proliferation. AMPK acts via direct phosphorylation of metabolic enzymes, and by longer-term effects via phosphorylation of transcription regulators. Also acts as a regulator of cellular polarity by remodeling the actin cytoskeleton; probably by indirectly activating myosin. Gamma non-catalytic subunit mediates binding to AMP, ADP and ATP, leading to activate or inhibit AMPK: AMP-binding results in allosteric activation of alpha catalytic subunit (PRKAA1 or PRKAA2) both by inducing phosphorylation and preventing dephosphorylation of catalytic subunits. ADP also stimulates phosphorylation, without stimulating already phosphorylated catalytic subunit. ATP promotes dephosphorylation of catalytic subunit, rendering the AMPK enzyme inactive. The polypeptide is 5'-AMP-activated protein kinase subunit gamma-1 (Prkag1) (Mus musculus (Mouse)).